Here is a 373-residue protein sequence, read N- to C-terminus: Chaperone protein DnaJ (373 aa).

Residues 4-69 enclose the J domain; that stretch reads NYYEILEISQ…EKRSIYDRYG (66 aa). The segment at 133–210 adopts a CR-type zinc-finger fold; sequence GCKKKIDFSY…CHGNGYEEIK (78 aa). Zn(2+) contacts are provided by Cys146, Cys149, Cys162, Cys165, Cys184, Cys187, Cys198, and Cys201. 4 CXXCXGXG motif repeats span residues 146-153, 162-169, 184-191, and 198-205; these read CKSCKGSG, CPHCGGKG, CDHCKGSG, and CKTCHGNG.

It belongs to the DnaJ family. Homodimer. Requires Zn(2+) as cofactor.

The protein localises to the cytoplasm. Its function is as follows. Participates actively in the response to hyperosmotic and heat shock by preventing the aggregation of stress-denatured proteins and by disaggregating proteins, also in an autonomous, DnaK-independent fashion. Unfolded proteins bind initially to DnaJ; upon interaction with the DnaJ-bound protein, DnaK hydrolyzes its bound ATP, resulting in the formation of a stable complex. GrpE releases ADP from DnaK; ATP binding to DnaK triggers the release of the substrate protein, thus completing the reaction cycle. Several rounds of ATP-dependent interactions between DnaJ, DnaK and GrpE are required for fully efficient folding. Also involved, together with DnaK and GrpE, in the DNA replication of plasmids through activation of initiation proteins. This chain is Chaperone protein DnaJ, found in Campylobacter lari (strain RM2100 / D67 / ATCC BAA-1060).